Consider the following 307-residue polypeptide: Putative lipid kinase SERP0390 (307 aa).

In terms of domain architecture, DAGKc spans 3–139 (QPYNHGVLFY…YDVLKVNDLY (137 aa)). ATP is bound by residues Ser44, 74–80 (GDGTLNE), and Thr101. Residues Ser220, Asp223, and Arg225 each coordinate Mg(2+). The active-site Proton acceptor is Glu281.

This sequence belongs to the diacylglycerol/lipid kinase family. It depends on Mg(2+) as a cofactor.

Functionally, may catalyze the ATP-dependent phosphorylation of lipids other than diacylglycerol (DAG). The polypeptide is Putative lipid kinase SERP0390 (Staphylococcus epidermidis (strain ATCC 35984 / DSM 28319 / BCRC 17069 / CCUG 31568 / BM 3577 / RP62A)).